Here is a 384-residue protein sequence, read N- to C-terminus: 4-coumarate--CoA ligase (384 aa).

It belongs to the ATP-dependent AMP-binding enzyme family.

It catalyses the reaction (E)-4-coumarate + ATP + CoA = (E)-4-coumaroyl-CoA + AMP + diphosphate. Its function is as follows. Converts p-coumaric acid into p-coumaryl CoA. This is necessary for the activation of the photoactive yellow protein (PYP) chromophore. The polypeptide is 4-coumarate--CoA ligase (pcl) (Rhodobacter capsulatus (strain ATCC BAA-309 / NBRC 16581 / SB1003)).